Reading from the N-terminus, the 312-residue chain is MERSLALANMTRVQQFILLGLSTRLDIRDALFAVFLTLYLLTLLENTLIIYLICSHKELHKPMYFFLGNLSCLEMCYVSVTMPTLLMGLWNGLYHIPFIACMTQLFFFIVLVGTECILLASMAYDRYVAICRPLHYPVLMRPQVCLGLAMISWLGGLLVSMIKTTCIATLSYCGPNVLNHFFCDVSPLLNLSCTHVALTELVDFISAIVILWGCFLTTMASYVAIGRAVLRMPSTTARYKAFSTCASHLVVVGIFYSVTIFIYARPKRIEAMDLNKVLSVIYTVVTPMCNPVIYCLRNKEVQVALHRTMHWS.

The Extracellular portion of the chain corresponds to 1-29 (MERSLALANMTRVQQFILLGLSTRLDIRD). Asparagine 9 carries N-linked (GlcNAc...) asparagine glycosylation. Residues 30–50 (ALFAVFLTLYLLTLLENTLII) traverse the membrane as a helical segment. Over 51–69 (YLICSHKELHKPMYFFLGN) the chain is Cytoplasmic. The chain crosses the membrane as a helical span at residues 70 to 90 (LSCLEMCYVSVTMPTLLMGLW). Position 91 (asparagine 91) is a topological domain, extracellular. Residues 92-112 (GLYHIPFIACMTQLFFFIVLV) traverse the membrane as a helical segment. A disulfide bridge connects residues cysteine 101 and cysteine 193. At 113-141 (GTECILLASMAYDRYVAICRPLHYPVLMR) the chain is on the cytoplasmic side. The helical transmembrane segment at 142–162 (PQVCLGLAMISWLGGLLVSMI) threads the bilayer. Residues 163-195 (KTTCIATLSYCGPNVLNHFFCDVSPLLNLSCTH) are Extracellular-facing. N-linked (GlcNAc...) asparagine glycosylation occurs at asparagine 190. A helical membrane pass occupies residues 196–216 (VALTELVDFISAIVILWGCFL). Residues 217–241 (TTMASYVAIGRAVLRMPSTTARYKA) are Cytoplasmic-facing. The helical transmembrane segment at 242–262 (FSTCASHLVVVGIFYSVTIFI) threads the bilayer. The Extracellular segment spans residues 263 to 275 (YARPKRIEAMDLN). A helical transmembrane segment spans residues 276–296 (KVLSVIYTVVTPMCNPVIYCL). At 297–312 (RNKEVQVALHRTMHWS) the chain is on the cytoplasmic side.

It belongs to the G-protein coupled receptor 1 family.

The protein localises to the cell membrane. Functionally, odorant receptor. This Mus musculus (Mouse) protein is Olfactory receptor 6Z7.